We begin with the raw amino-acid sequence, 184 residues long: RNA 2',3'-cyclic phosphodiesterase (184 aa).

The Proton donor role is filled by His40. Short sequence motifs (HXTX) lie at residues 40–43 and 125–128; these read HITL. The active-site Proton acceptor is the His125.

This sequence belongs to the 2H phosphoesterase superfamily. ThpR family.

It carries out the reaction a 3'-end 2',3'-cyclophospho-ribonucleotide-RNA + H2O = a 3'-end 2'-phospho-ribonucleotide-RNA + H(+). Functionally, hydrolyzes RNA 2',3'-cyclic phosphodiester to an RNA 2'-phosphomonoester. In vitro, ligates 5' and 3' half-tRNA molecules with 2',3'-cyclic phosphate and 5'-hydroxyl termini, respectively, to the product containing the 2'-5' phosphodiester linkage. Ligase activity requires GTP, but GTP hydrolysis is not required for the reaction, which is reversible. Ligase activity is weak compared to the phosphodiesterase activity. The sequence is that of RNA 2',3'-cyclic phosphodiesterase from Pyrococcus furiosus (strain ATCC 43587 / DSM 3638 / JCM 8422 / Vc1).